The following is a 119-amino-acid chain: Holo-[acyl-carrier-protein] synthase (119 aa).

Asp-8 and Glu-58 together coordinate Mg(2+).

It belongs to the P-Pant transferase superfamily. AcpS family. Requires Mg(2+) as cofactor.

The protein localises to the cytoplasm. The catalysed reaction is apo-[ACP] + CoA = holo-[ACP] + adenosine 3',5'-bisphosphate + H(+). Its function is as follows. Transfers the 4'-phosphopantetheine moiety from coenzyme A to a Ser of acyl-carrier-protein. The chain is Holo-[acyl-carrier-protein] synthase from Bacillus thuringiensis subsp. konkukian (strain 97-27).